Consider the following 270-residue polypeptide: UPF0246 protein PsycPRwf_0637 (270 aa).

The protein belongs to the UPF0246 family.

In Psychrobacter sp. (strain PRwf-1), this protein is UPF0246 protein PsycPRwf_0637.